The chain runs to 122 residues: UPF0382 membrane protein SAUSA300_0565 (122 aa).

4 helical membrane-spanning segments follow: residues 3–23, 46–66, 69–89, and 98–118; these read LFII…AFGA, MYHG…SINV, AGWL…ILVL, and ITPI…IATF.

It belongs to the UPF0382 family.

The protein resides in the cell membrane. This is UPF0382 membrane protein SAUSA300_0565 from Staphylococcus aureus (strain USA300).